Reading from the N-terminus, the 354-residue chain is Glycine betaine/proline betaine transport system permease protein ProW (354 aa).

Positions 1-41 (MADQNNPWDTTPAADSAAQSADAWGTPTTAPTDGGGADWLT) are disordered. Topologically, residues 1–99 (MADQNNPWDT…VDYILNGFQQ (99 aa)) are cytoplasmic. Positions 13–32 (AADSAAQSADAWGTPTTAPT) are enriched in low complexity. Residues 100 to 120 (LLLGMPAPVAIIVFALIAWQI) traverse the membrane as a helical segment. S121 is a topological domain (periplasmic). Residues 122-142 (GVGMGVATLVSLIAIGAIGAW) form a helical membrane-spanning segment. At 143–148 (SQAMVT) the chain is on the cytoplasmic side. In terms of domain architecture, ABC transmembrane type-1 spans 145 to 324 (AMVTLALVLT…ILAIILDRLT (180 aa)). A helical membrane pass occupies residues 149–169 (LALVLTALLFCIVIGLPLGIW). Residues 170-198 (LARSPRAAKIIRPLLDAMQTTPAFVYLVP) lie on the Periplasmic side of the membrane. A helical membrane pass occupies residues 199 to 219 (IVMLFGIGNVPGVVVTIIFAL). Residues 220 to 270 (PPIIRLTILGINQVPADLIEASRSFGASPRQMLFKVQLPLAMPTIMAGVNQ) are Cytoplasmic-facing. Residues 271-291 (TLMLALSMVVIASMIAVGGLG) traverse the membrane as a helical segment. At 292 to 300 (QMVLRGIGR) the chain is on the periplasmic side. Residues 301-321 (LDMGLATVGGVGIVILAIILD) form a helical membrane-spanning segment. At 322 to 354 (RLTQAVGRDSRSRGNRRWYTTGPVGLLTRPFIK) the chain is on the cytoplasmic side.

It belongs to the binding-protein-dependent transport system permease family. CysTW subfamily. The complex is composed of two ATP-binding proteins (ProV), two transmembrane proteins (ProW) and a solute-binding protein (ProX).

It is found in the cell inner membrane. In terms of biological role, part of the ProU ABC transporter complex involved in glycine betaine and proline betaine uptake. Probably responsible for the translocation of the substrate across the membrane. This is Glycine betaine/proline betaine transport system permease protein ProW from Escherichia coli (strain K12).